The chain runs to 66 residues: Large ribosomal subunit protein uL29 (66 aa).

This sequence belongs to the universal ribosomal protein uL29 family.

The protein is Large ribosomal subunit protein uL29 of Rhizobium meliloti (strain 1021) (Ensifer meliloti).